Consider the following 363-residue polypeptide: Peptide chain release factor 2 (363 aa).

Glutamine 251 is subject to N5-methylglutamine.

It belongs to the prokaryotic/mitochondrial release factor family. Methylated by PrmC. Methylation increases the termination efficiency of RF2.

Its subcellular location is the cytoplasm. Its function is as follows. Peptide chain release factor 2 directs the termination of translation in response to the peptide chain termination codons UGA and UAA. In Helicobacter pylori (strain J99 / ATCC 700824) (Campylobacter pylori J99), this protein is Peptide chain release factor 2 (prfB).